We begin with the raw amino-acid sequence, 319 residues long: Annexin A5 (319 aa).

N-acetylalanine is present on Ala2. Annexin repeat units lie at residues 13–84 (FDGR…ALMK), 85–156 (PSRL…VLLQ), 168–240 (AQVE…AVVK), and 244–315 (SIPA…LLCG). Residue Lys27 forms a Glycyl lysine isopeptide (Lys-Gly) (interchain with G-Cter in SUMO1); alternate linkage. Lys27 participates in a covalent cross-link: Glycyl lysine isopeptide (Lys-Gly) (interchain with G-Cter in SUMO2); alternate. At Ser35 the chain carries Phosphoserine. An N6-acetyllysine mark is found at Lys68, Lys74, Lys77, Lys95, and Lys99. Lys288 carries the post-translational modification N6-succinyllysine. The short motif at 312 to 318 (LLCGGED) is the [IL]-x-C-x-x-[DE] motif element.

It belongs to the annexin family. As to quaternary structure, monomer. Binds ATRX, EIF5B and DNMT1. In terms of processing, S-nitrosylation is induced by interferon-gamma and oxidatively-modified low-densitity lipoprotein (LDL(ox)) possibly implicating the iNOS-S100A8/9 transnitrosylase complex.

This protein is an anticoagulant protein that acts as an indirect inhibitor of the thromboplastin-specific complex, which is involved in the blood coagulation cascade. The sequence is that of Annexin A5 (Anxa5) from Rattus norvegicus (Rat).